Reading from the N-terminus, the 486-residue chain is L-carnitine:corrinoid methyltransferase (486 aa).

Belongs to the trimethylamine methyltransferase family. In terms of assembly, the L-carnitine:THF methyl transfer system is composed of two methyltransferases, MtcB and MtqA, and the corrinoid protein MtqC.

It catalyses the reaction Co(I)-[quaternary-amine-specific corrinoid protein] + (R)-carnitine + H(+) = (3R)-4-(dimethylamino)-3-hydroxybutanoate + methyl-Co(III)-[quaternary-amine-specific corrinoid protein]. Its function is as follows. Involved in the degradation of the quaternary amine L-carnitine. Component of a corrinoid-dependent methyltransferase system that transfers a methyl group from L-carnitine to tetrahydrofolate (THF), forming methyl-THF, a key intermediate in the Wood-Ljungdahl acetogenesis pathway. MtcB catalyzes the methylation of the corrinoid protein MtqC, using L-carnitine as the methyl donor. L-carnitine demethylation generates the unusual biological product norcarnitine, which is likely degraded by other members of the gut microbiota. In vitro, can methylate free cob(I)alamin. In Eubacterium limosum, this protein is L-carnitine:corrinoid methyltransferase.